The sequence spans 370 residues: Phospho-N-acetylmuramoyl-pentapeptide-transferase (370 aa).

The next 10 helical transmembrane spans lie at 31–51, 73–93, 98–118, 135–155, 177–197, 209–229, 251–271, 273–293, 298–318, and 347–367; these read LTSM…LYGL, TMGG…WGNL, IIVL…DDYM, LLSI…TGVI, GPVL…IIGS, GLAT…AYVS, VFLS…AHPA, VFMG…IVIL, ILLL…ILQV, and KIVI…LSTL.

The protein belongs to the glycosyltransferase 4 family. MraY subfamily. Mg(2+) serves as cofactor.

The protein resides in the cell inner membrane. It carries out the reaction UDP-N-acetyl-alpha-D-muramoyl-L-alanyl-gamma-D-glutamyl-meso-2,6-diaminopimeloyl-D-alanyl-D-alanine + di-trans,octa-cis-undecaprenyl phosphate = di-trans,octa-cis-undecaprenyl diphospho-N-acetyl-alpha-D-muramoyl-L-alanyl-D-glutamyl-meso-2,6-diaminopimeloyl-D-alanyl-D-alanine + UMP. It functions in the pathway cell wall biogenesis; peptidoglycan biosynthesis. Catalyzes the initial step of the lipid cycle reactions in the biosynthesis of the cell wall peptidoglycan: transfers peptidoglycan precursor phospho-MurNAc-pentapeptide from UDP-MurNAc-pentapeptide onto the lipid carrier undecaprenyl phosphate, yielding undecaprenyl-pyrophosphoryl-MurNAc-pentapeptide, known as lipid I. The polypeptide is Phospho-N-acetylmuramoyl-pentapeptide-transferase (Leptospira borgpetersenii serovar Hardjo-bovis (strain JB197)).